We begin with the raw amino-acid sequence, 258 residues long: Insulin-like growth factor-binding protein 4 (258 aa).

An N-terminal signal peptide occupies residues 1 to 21 (MLSLCLMAALLLAAGPGPSLG). Positions 23 to 103 (EAIHCPPCSE…VHGQGVCMEL (81 aa)) constitute an IGFBP N-terminal domain. Cystine bridges form between cysteine 27-cysteine 53, cysteine 30-cysteine 55, cysteine 38-cysteine 56, cysteine 44-cysteine 59, cysteine 67-cysteine 80, and cysteine 74-cysteine 100. N-linked (GlcNAc...) asparagine glycosylation occurs at asparagine 125. Intrachain disulfides connect cysteine 131/cysteine 138, cysteine 174/cysteine 204, cysteine 215/cysteine 226, and cysteine 228/cysteine 249. Residues 171-249 (QGSCQSELHR…GLEPKGELDC (79 aa)) form the Thyroglobulin type-1 domain. Serine 255 is subject to Phosphoserine.

In terms of assembly, binds IGF2 more than IGF1.

The protein localises to the secreted. In terms of biological role, IGF-binding proteins prolong the half-life of the IGFs and have been shown to either inhibit or stimulate the growth promoting effects of the IGFs on cell culture. They alter the interaction of IGFs with their cell surface receptors. The polypeptide is Insulin-like growth factor-binding protein 4 (IGFBP4) (Bos taurus (Bovine)).